We begin with the raw amino-acid sequence, 347 residues long: uncharacterized protein (347 aa).

The protein resides in the cytoplasm. It localises to the nucleus. This is an uncharacterized protein from Schizosaccharomyces pombe (strain 972 / ATCC 24843) (Fission yeast).